Consider the following 1331-residue polypeptide: DNA replication ATP-dependent helicase/nuclease JHS1 (1331 aa).

Residues 1-98 (MPPRKKPKSS…DMDQQLTEAS (98 aa)) form a disordered region. Positions 2–8 (PPRKKPK) match the Nuclear localization signal motif. The span at 11–31 (ALKSNKQSSANHSSQPSTFGI) shows a compositional bias: polar residues. Low complexity predominate over residues 40-52 (QNSQSTSNSHTST). Polar residues predominate over residues 57-81 (DQQNVNGLASDTAVLTPQNPLGTSN). Positions 82-91 (EKPDESKDMD) are enriched in basic and acidic residues. Positions 362–811 (ECALYLWDEW…CKLRTGDRVI (450 aa)) are nuclease activity. [4Fe-4S] cluster is bound by residues Cys422, Cys666, Cys669, and Cys675. The tract at residues 812-1331 (LRTEVSHLTV…LNLLPGDLKP (520 aa)) is helicase activity. Residues 924–1271 (NNDQRQAILK…VRSREKPRSS (348 aa)) enclose the UvrD-like helicase ATP-binding domain. ATP is bound at residue 945-952 (GMPGTGKT).

The protein belongs to the DNA2/NAM7 helicase family. Requires [4Fe-4S] cluster as cofactor. In terms of tissue distribution, strongly expressed in meristems, including both root and shoot apical meristems (RAM and SAM). Also present in the vasculature and in young floral tissues.

The protein localises to the nucleus. It is found in the chromosome. The enzyme catalyses ATP + H2O = ADP + phosphate + H(+). Functionally, essential protein required during embryogenesis. Key enzyme involved in DNA replication and damage repair, shoot apical meristem (SAM) maintenance, and development. Involved in Okazaki fragments processing. Possesses different enzymatic activities, such as single-stranded DNA (ssDNA)-dependent ATPase, 5'-3' helicase and endonuclease activities. While the ATPase and endonuclease activities are well-defined and play a key role in Okazaki fragments processing and DSB repair, the 5'-3' DNA helicase activity is atypical: it cannot load onto its tracking strand internally and has an absolute free 5'-end requirement. In Arabidopsis thaliana (Mouse-ear cress), this protein is DNA replication ATP-dependent helicase/nuclease JHS1.